Consider the following 384-residue polypeptide: Calreticulin-3 (384 aa).

The N-terminal stretch at 1-19 (MAAARVPLWAICVRRVALA) is a signal peptide. The segment at 20-197 (TVYFQEEFLD…GQSIESGSIE (178 aa)) is N-domain. N42 carries N-linked (GlcNAc...) asparagine glycosylation. The cysteines at positions 105 and 137 are disulfide-linked. An alpha-D-glucoside-binding residues include Y109, K111, Y128, and D135. 7 tandem repeats follow at residues 191–202 (IESGSIEYDWQL), 209–220 (EKASAEAEGWDQ), 222–231 (AKDKSQDWEK), 235–246 (DASASKPSDWKG), 250–260 (GDWQAAMLQKP), 264–272 (DGLKPEGID), and 274–284 (DVWLHQKMKNS). Positions 191-246 (IESGSIEYDWQLTSLKKMEKASAEAEGWDQAAKDKSQDWEKHFLDASASKPSDWKG) are 4 X approximate repeats. The tract at residues 198–294 (YDWQLTSLKK…YLTEYDLSEF (97 aa)) is P-domain. Positions 250-284 (GDWQAAMLQKPPYQDGLKPEGIDKDVWLHQKMKNS) are 3 X approximate repeats. The segment at 295 to 384 (ENIGAVGLEL…FKGFHRRNEF (90 aa)) is C-domain. E303 provides a ligand contact to an alpha-D-glucoside. A Prevents secretion from ER motif is present at residues 381–384 (RNEF).

The protein belongs to the calreticulin family. In terms of assembly, component of an EIF2 complex at least composed of CELF1/CUGBP1, CALR, CALR3, EIF2S1, EIF2S2, HSP90B1 and HSPA5.

The protein localises to the endoplasmic reticulum lumen. In terms of biological role, during spermatogenesis, may act as a lectin-independent chaperone for specific client proteins such as ADAM3. CALR3 capacity for calcium-binding may be absent or much lower than that of CALR. Required for sperm fertility. The sequence is that of Calreticulin-3 (CALR3) from Bos taurus (Bovine).